Reading from the N-terminus, the 296-residue chain is MSVLYPSLEDLKVGQVIQAQARASPMMPTVMPTLPASMASAPPLSELYPNLAELESYMGLSLSSQEVQKNLSQIPDGDNMVITSPGPGQVTAPVSGNDLGVLRAEIKPGVREIHLCKDERGKTGLRLQAVDKGLFVQLVQANTPASLVGLRFGDQILQIDGCDCAGWSTHKAQKALKKASAEKIVMVVRDRPFQRTVTMHKDSSGQVGFFIKKGKIVSVVKGSSAARNGLLTNHYVCEVNGQNVIGLKDKKIIEILTTAGNVITLTIIPTVIYEHMIKKLSPLLLHHTMDHSIPDT.

PDZ domains are found at residues 112-191 (EIHL…VRDR) and 196-271 (TVTM…IPTV).

As to quaternary structure, monomer and homodimer. Interacts with SDCBP. Interacts with TM4SF1.

It localises to the cytoplasm. The protein localises to the nucleus. It is found in the nucleolus. The protein resides in the nucleoplasm. Its subcellular location is the cell membrane. It localises to the nucleus speckle. Binds phosphatidylinositol 4,5-bisphosphate (PIP2). May play a role in the organization of nuclear PIP2, cell division and cell survival. This is Syntenin-2 (Sdcbp2) from Rattus norvegicus (Rat).